The chain runs to 706 residues: Polyribonucleotide nucleotidyltransferase (706 aa).

Mg(2+)-binding residues include Asp486 and Asp492. Residues 553–612 (PRIYTMKINPEKIKDVIGKGGSVIRALTDETGTTIEIEDDGTIKIAATDGDKAKHAIRRI) enclose the KH domain. One can recognise an S1 motif domain in the interval 622 to 690 (NRIYAGKVTR…RQGRIRLSMK (69 aa)).

It belongs to the polyribonucleotide nucleotidyltransferase family. Component of the RNA degradosome, which is a multiprotein complex involved in RNA processing and mRNA degradation. Mg(2+) is required as a cofactor.

Its subcellular location is the cytoplasm. The catalysed reaction is RNA(n+1) + phosphate = RNA(n) + a ribonucleoside 5'-diphosphate. Involved in mRNA degradation. Catalyzes the phosphorolysis of single-stranded polyribonucleotides processively in the 3'- to 5'-direction. This Yersinia enterocolitica serotype O:8 / biotype 1B (strain NCTC 13174 / 8081) protein is Polyribonucleotide nucleotidyltransferase.